The primary structure comprises 497 residues: Probable FAD-binding monooxygenase AlmA (497 aa).

The chain crosses the membrane as a helical span at residues Gln-4–Ser-24. Positions 15, 36, 56, 62, and 104 each coordinate FAD. Arg-54–Asp-56 is an NADP(+) binding site. NADP(+)-binding positions include Ser-184–Thr-190, Arg-208–Ser-209, and Arg-292–Leu-293. FAD is bound at residue Val-395.

Belongs to the FAD-binding monooxygenase family. It depends on FAD as a cofactor.

The protein resides in the cell membrane. Its pathway is hydrocarbon metabolism; alkane degradation. Its function is as follows. Is involved in the degradation of n-alkanes with C chain lengths of 32 and longer. Allows Acinetobacter sp. strain DSM 17874 to grow on long-chain n-alkanes such as dotriacontane (C32H66) or hexatriacontane (C36H74) as a sole carbon source. The protein is Probable FAD-binding monooxygenase AlmA of Acinetobacter sp.